A 917-amino-acid polypeptide reads, in one-letter code: DNA mismatch repair protein spellchecker 1 (917 aa).

667–674 (GPNMGGKS) provides a ligand contact to ATP.

The protein belongs to the DNA mismatch repair MutS family. In terms of assembly, heterodimer of Msh2/Spel and Msh6.

The protein resides in the nucleus. Its function is as follows. Involved in postreplication mismatch repair. Binds specifically to DNA containing mismatched nucleotides thus providing a target for the excision repair processes characteristic of postreplication mismatch repair. The chain is DNA mismatch repair protein spellchecker 1 (spel1) from Drosophila melanogaster (Fruit fly).